The primary structure comprises 463 residues: Protein phosphatase PP2A regulatory subunit B (463 aa).

WD repeat units follow at residues 27–66 and 87–128; these read TEAD…KGCE and EIEE…LKVV. Ser134 is modified (phosphoserine). WD repeat units lie at residues 174 to 212, 223 to 263, 282 to 320, and 337 to 378; these read AHAY…HSFN, ELTE…LCDN, EIIS…APVK, and ENDC…PGDR.

The protein belongs to the phosphatase 2A regulatory subunit B family. As to quaternary structure, PP2A exists in several trimeric forms, all of which consist of a core composed of a catalytic subunit associated with a 65 kDa (PR65) (Subunit A) and a 55 kDa (PR55) (Subunit B) regulatory subunit.

Phosphatase 2A affects a variety of biological processes in the cell such as transcription, cell cycle progression and cellular morphogenesis, and provides an initial identification of critical substrates for this phosphatase. The regulatory subunit may direct the catalytic subunit to distinct, albeit overlapping, subsets of substrates. The chain is Protein phosphatase PP2A regulatory subunit B (pab1) from Schizosaccharomyces pombe (strain 972 / ATCC 24843) (Fission yeast).